Reading from the N-terminus, the 184-residue chain is Interferon alpha-3 (184 aa).

The N-terminal stretch at Met1–Gly23 is a signal peptide. Disulfide bonds link Cys24–Cys122 and Cys52–Cys162.

The protein belongs to the alpha/beta interferon family.

Its subcellular location is the secreted. Produced by macrophages, IFN-alpha have antiviral activities. Interferon stimulates the production of two enzymes: a protein kinase and an oligoadenylate synthetase. This Equus caballus (Horse) protein is Interferon alpha-3.